The primary structure comprises 503 residues: U6 snRNA (guanine-N(2))-methyltransferase THUMPD2 (503 aa).

A THUMP domain is found at 161 to 266 (CQLEKQIKEE…DIYSVVGIPV (106 aa)).

It belongs to the methyltransferase superfamily. As to quaternary structure, part of the heterodimeric THUMPD2-TRM112 methyltransferase complex; this complex forms an active tRNA methyltransferase, where TRMT112 acts as an activator of the catalytic subunit THUMPD2. As to expression, expressed in a variety of tissues including brain, colon, gingiva, heart, kidney, liver, lung, placenta, small intestine, spleen and thymus.

The protein resides in the nucleus. The enzyme catalyses guanosine in U6 snRNA + S-adenosyl-L-methionine = N(2)-methylguanosine in U6 snRNA + S-adenosyl-L-homocysteine + H(+). In terms of biological role, catalytic subunit of the THUMPD2-TRM112 methyltransferase complex, that specifically mediates the S-adenosyl-L-methionine-dependent N(2)-methylation of guanosine nucleotides, most probably at position 72 (m2G72), in the U6snRNA of the major spliceosome. This modification in the U6 snRNA affects the constitutive splicing efficiency of introns that have suboptimal splice sites and can impact final mRNA levels. In Homo sapiens (Human), this protein is U6 snRNA (guanine-N(2))-methyltransferase THUMPD2.